Consider the following 1372-residue polypeptide: DNA-directed RNA polymerase subunit beta (1372 aa).

The protein belongs to the RNA polymerase beta chain family. As to quaternary structure, the RNAP catalytic core consists of 2 alpha, 1 beta, 1 beta' and 1 omega subunit. When a sigma factor is associated with the core the holoenzyme is formed, which can initiate transcription.

The enzyme catalyses RNA(n) + a ribonucleoside 5'-triphosphate = RNA(n+1) + diphosphate. Functionally, DNA-dependent RNA polymerase catalyzes the transcription of DNA into RNA using the four ribonucleoside triphosphates as substrates. This chain is DNA-directed RNA polymerase subunit beta, found in Rickettsia bellii (strain OSU 85-389).